Reading from the N-terminus, the 106-residue chain is NADH-quinone oxidoreductase subunit K (106 aa).

3 helical membrane passes run 10-30, 35-55, and 67-87; these read IHYY…GVMV, VLIF…FVTF, and VVFF…AIVI.

It belongs to the complex I subunit 4L family. As to quaternary structure, NDH-1 is composed of 14 different subunits. Subunits NuoA, H, J, K, L, M, N constitute the membrane sector of the complex.

Its subcellular location is the cell inner membrane. It catalyses the reaction a quinone + NADH + 5 H(+)(in) = a quinol + NAD(+) + 4 H(+)(out). Its function is as follows. NDH-1 shuttles electrons from NADH, via FMN and iron-sulfur (Fe-S) centers, to quinones in the respiratory chain. The immediate electron acceptor for the enzyme in this species is believed to be ubiquinone. Couples the redox reaction to proton translocation (for every two electrons transferred, four hydrogen ions are translocated across the cytoplasmic membrane), and thus conserves the redox energy in a proton gradient. The protein is NADH-quinone oxidoreductase subunit K of Leptospira borgpetersenii serovar Hardjo-bovis (strain JB197).